A 187-amino-acid chain; its full sequence is dCTP deaminase (187 aa).

DCTP is bound by residues 110–115, 134–136, Gln-155, Tyr-169, and Gln-179; these read KSTYAR and TLE. Glu-136 (proton donor/acceptor) is an active-site residue.

This sequence belongs to the dCTP deaminase family. Homotrimer.

The catalysed reaction is dCTP + H2O + H(+) = dUTP + NH4(+). Its pathway is pyrimidine metabolism; dUMP biosynthesis; dUMP from dCTP (dUTP route): step 1/2. Catalyzes the deamination of dCTP to dUTP. This Bordetella bronchiseptica (strain ATCC BAA-588 / NCTC 13252 / RB50) (Alcaligenes bronchisepticus) protein is dCTP deaminase.